A 462-amino-acid chain; its full sequence is Glycine--tRNA ligase (462 aa).

Residues Arg101 and Glu164 each contribute to the substrate site. Residues 196-198, 206-211, 283-284, and 327-330 each bind ATP; these read RNE, FRTREF, EL, and GVDR. Residue 211-215 participates in substrate binding; sequence FEQME. Position 323–327 (323–327) interacts with substrate; it reads EPSAG.

The protein belongs to the class-II aminoacyl-tRNA synthetase family. Homodimer.

It is found in the cytoplasm. The enzyme catalyses tRNA(Gly) + glycine + ATP = glycyl-tRNA(Gly) + AMP + diphosphate. In terms of biological role, catalyzes the attachment of glycine to tRNA(Gly). The chain is Glycine--tRNA ligase from Thermobifida fusca (strain YX).